The chain runs to 161 residues: Glycine cleavage system H protein 2 (161 aa).

A Lipoyl-binding domain is found at 34–116 (TVTVGVTDIG…YGEGWIAKLK (83 aa)). The residue at position 75 (Lys-75) is an N6-lipoyllysine.

Belongs to the GcvH family. As to quaternary structure, the glycine cleavage system is composed of four proteins: P, T, L and H. Requires (R)-lipoate as cofactor.

Its function is as follows. The glycine cleavage system catalyzes the degradation of glycine. The H protein shuttles the methylamine group of glycine from the P protein to the T protein. The protein is Glycine cleavage system H protein 2 of Aquifex aeolicus (strain VF5).